The primary structure comprises 62 residues: Large ribosomal subunit protein bL28 (62 aa).

It belongs to the bacterial ribosomal protein bL28 family.

In Aliarcobacter butzleri (strain RM4018) (Arcobacter butzleri), this protein is Large ribosomal subunit protein bL28.